Reading from the N-terminus, the 787-residue chain is LPS-assembly protein LptD (787 aa).

An N-terminal signal peptide occupies residues 1–39 (MPPKTLFPLVPACDAAPRKKRLAVALLAVPGLVPAVSQA).

This sequence belongs to the LptD family. As to quaternary structure, component of the lipopolysaccharide transport and assembly complex. Interacts with LptE and LptA.

The protein resides in the cell outer membrane. Together with LptE, is involved in the assembly of lipopolysaccharide (LPS) at the surface of the outer membrane. The chain is LPS-assembly protein LptD from Burkholderia pseudomallei (strain 1710b).